Here is a 430-residue protein sequence, read N- to C-terminus: Adenylosuccinate synthetase (430 aa).

GTP contacts are provided by residues 13 to 19 and 41 to 43; these read GDEGKGK and GHT. D14 serves as the catalytic Proton acceptor. Positions 14 and 41 each coordinate Mg(2+). IMP is bound by residues 14–17, 39–42, T130, R144, Q225, T240, and R304; these read DEGK and NAGH. Catalysis depends on H42, which acts as the Proton donor. Position 300-306 (300-306) interacts with substrate; it reads ASTGRPR. GTP contacts are provided by residues R306, 332 to 334, and 414 to 416; these read KLD and STG.

Belongs to the adenylosuccinate synthetase family. Homodimer. Requires Mg(2+) as cofactor.

Its subcellular location is the cytoplasm. The enzyme catalyses IMP + L-aspartate + GTP = N(6)-(1,2-dicarboxyethyl)-AMP + GDP + phosphate + 2 H(+). It functions in the pathway purine metabolism; AMP biosynthesis via de novo pathway; AMP from IMP: step 1/2. In terms of biological role, plays an important role in the de novo pathway of purine nucleotide biosynthesis. Catalyzes the first committed step in the biosynthesis of AMP from IMP. This Xylella fastidiosa (strain M23) protein is Adenylosuccinate synthetase.